The sequence spans 428 residues: Histidine--tRNA ligase (428 aa).

The protein belongs to the class-II aminoacyl-tRNA synthetase family. Homodimer.

It is found in the cytoplasm. The enzyme catalyses tRNA(His) + L-histidine + ATP = L-histidyl-tRNA(His) + AMP + diphosphate + H(+). The polypeptide is Histidine--tRNA ligase (Bordetella pertussis (strain Tohama I / ATCC BAA-589 / NCTC 13251)).